A 160-amino-acid chain; its full sequence is Phosphopantetheine adenylyltransferase (160 aa).

Substrate is bound at residue Ser8. ATP-binding positions include 8 to 9 (SF) and His16. Positions 40, 73, and 87 each coordinate substrate. Residues 88 to 90 (GLR), Glu98, and 122 to 128 (YGYVSST) contribute to the ATP site.

This sequence belongs to the bacterial CoaD family. Homohexamer. Requires Mg(2+) as cofactor.

Its subcellular location is the cytoplasm. The catalysed reaction is (R)-4'-phosphopantetheine + ATP + H(+) = 3'-dephospho-CoA + diphosphate. It functions in the pathway cofactor biosynthesis; coenzyme A biosynthesis; CoA from (R)-pantothenate: step 4/5. Reversibly transfers an adenylyl group from ATP to 4'-phosphopantetheine, yielding dephospho-CoA (dPCoA) and pyrophosphate. This chain is Phosphopantetheine adenylyltransferase, found in Corynebacterium glutamicum (strain R).